We begin with the raw amino-acid sequence, 706 residues long: Melanopsin (706 aa).

The Extracellular segment spans residues 1 to 86 (MTEIPSFQPP…VWDIPPLAHY (86 aa)). N-linked (GlcNAc...) asparagine glycosylation is found at asparagine 12, asparagine 64, and asparagine 69. A helical transmembrane segment spans residues 87-107 (IVGTAVFCIGCCGMFGNAVVV). Residues 108-121 (YSFIKSKGLRTPAN) are Cytoplasmic-facing. The chain crosses the membrane as a helical span at residues 122 to 142 (FFIINLALSDFLMNLTNMPIF). At 143–159 (AVNSAFQRWLLSDFACE) the chain is on the extracellular side. Residues cysteine 158 and cysteine 236 are joined by a disulfide bond. Residues 160–180 (LYGFAGGLFGCLSINTLMAIS) form a helical membrane-spanning segment. Residues 181–201 (MDRYLVITKPFLVMRIVTKQR) are Cytoplasmic-facing. Residues 202-222 (VMFAILLLWIWSLVWALPPLF) traverse the membrane as a helical segment. Over 223–248 (GWSAYVSEGFGTSCTFDYMTPKLSYH) the chain is Extracellular. Residues 249-269 (IFTYIIFFTMYFIPGGVMIYC) form a helical membrane-spanning segment. Residues 270-314 (YYNIFATVKSGDKQFGKAVKEMAHEDVKNKAQQERQRKNEIKTAK) are Cytoplasmic-facing. A helical membrane pass occupies residues 315-335 (IAFIVISLFMSAWTPYAVVSA). The Extracellular portion of the chain corresponds to 336–351 (LGTLGYQDLVTPYLQS). Residues 352–372 (IPAMFAKSSAVYSPIVYAITY) traverse the membrane as a helical segment. At lysine 358 the chain carries N6-(retinylidene)lysine. The Cytoplasmic portion of the chain corresponds to 373 to 706 (PKFREAVKKH…LSEAHDETVL (334 aa)). 3 disordered regions span residues 393 to 446 (SEEE…RQDT), 571 to 599 (RTESGYDRSQDSQRKKVVGDTHRSRSFNT), and 630 to 658 (QSSEKHEYDNPAFDEGITEVDTDSENETE). Composition is skewed to low complexity over residues 404–418 (QSSASASMSMTQTTA) and 426–442 (SVDSGSSVSVDDSSGVS). Basic and acidic residues predominate over residues 571-593 (RTESGYDRSQDSQRKKVVGDTHR). Positions 645–658 (GITEVDTDSENETE) are enriched in acidic residues.

This sequence belongs to the G-protein coupled receptor 1 family. Opsin subfamily. As to expression, expressed in Joseph cells and photoreceptor cells of the dorsal ocelli.

It localises to the cell membrane. Functionally, photoreceptor implicated in non-image-forming responses to light. Photoisomerizes covalently bound all-trans retinal back to 11-cis retinal. Most likely coupled to the G(q) signaling cascade. The polypeptide is Melanopsin (Branchiostoma belcheri (Amphioxus)).